The primary structure comprises 65 residues: U2-theraphotoxin-Pc1a (65 aa).

An N-terminal signal peptide occupies residues 1 to 20 (MGFKLVLFIAVLTLVGSSNA). Residues 21-36 (EISAKMDSRDSPMIQE) constitute a propeptide that is removed on maturation. Cystine bridges form between cysteine 39–cysteine 56, cysteine 46–cysteine 59, and cysteine 55–cysteine 64.

The protein belongs to the neurotoxin 36 family. 02 subfamily. Expressed by the venom gland.

Its subcellular location is the secreted. In terms of biological role, possesses strong antiplasmodial activity against the intra-erythrocyte stage of P.falciparum in vitro. IC(50) for inhibiting P.falciparum growth is 1.15 uM. Specifically interacts with infected erythrocytes. Does not lyse erythrocytes, is not cytotoxic to nucleated mammalian cells, and does not inhibit neuromuscular function. Has neither antibacterial nor antifungal activity. In Psalmopoeus cambridgei (Trinidad chevron tarantula), this protein is U2-theraphotoxin-Pc1a.